An 802-amino-acid chain; its full sequence is Spondin-1 (802 aa).

The N-terminal stretch at Met-1–Gly-23 is a signal peptide. A Reelin domain is found at Phe-24 to Lys-189. Cystine bridges form between Cys-39-Cys-123, Cys-151-Cys-177, Cys-194-Cys-331, Cys-195-Cys-335, Cys-197-Cys-410, Cys-438-Cys-475, Cys-449-Cys-484, Cys-454-Cys-489, Cys-497-Cys-533, Cys-508-Cys-512, Cys-543-Cys-549, Cys-554-Cys-590, Cys-565-Cys-569, Cys-600-Cys-605, Cys-610-Cys-645, Cys-621-Cys-625, and Cys-655-Cys-660. The region spanning Pro-190 to Pro-383 is the Spondin domain. N-linked (GlcNAc...) asparagine glycosylation is present at Asn-209. Ca(2+)-binding residues include Asp-320, Asp-349, and Asp-353. 6 consecutive TSP type-1 domains span residues Thr-437–Ser-490, Thr-496–Ser-550, Ser-553–His-606, Pro-609–Pro-661, Asp-663–Leu-716, and Val-749–Pro-801. Asn-676 is a glycosylation site (N-linked (GlcNAc...) asparagine).

Its subcellular location is the secreted. It localises to the extracellular space. The protein resides in the extracellular matrix. Functionally, cell adhesion protein that promotes the attachment of spinal cord and sensory neuron cells and the outgrowth of neurites in vitro. May contribute to the growth and guidance of axons in both the spinal cord and the PNS. Somite-derived spondin 1 is an inhibitory signal involved in patterning the segmental migration of neural crest cells and their topographical segregation within the rostral somites in vitro. May be required to prevent the lateral drifting of the commissural axons after having crossed the floor plate. This chain is Spondin-1 (SPON1), found in Gallus gallus (Chicken).